The sequence spans 386 residues: Cell division protein FtsZ (386 aa).

GTP is bound by residues 20–24 (GGGGN), 107–109 (GTG), glutamate 138, arginine 142, and asparagine 186. A disordered region spans residues 350-377 (LNQEQKTAAKAVNEQNAQGSKEPDYLDI).

The protein belongs to the FtsZ family. In terms of assembly, homodimer. Polymerizes to form a dynamic ring structure in a strictly GTP-dependent manner. Interacts directly with several other division proteins.

It is found in the cytoplasm. Its function is as follows. Essential cell division protein that forms a contractile ring structure (Z ring) at the future cell division site. The regulation of the ring assembly controls the timing and the location of cell division. One of the functions of the FtsZ ring is to recruit other cell division proteins to the septum to produce a new cell wall between the dividing cells. Binds GTP and shows GTPase activity. This is Cell division protein FtsZ from Sodalis glossinidius.